The primary structure comprises 568 residues: Kelch-like protein 12 (568 aa).

One can recognise a BTB domain in the interval 33-100 (CDVTLRVEQK…VYTETVHVTV (68 aa)). In terms of domain architecture, BACK spans 135-236 (CLGIRDFAET…LTPRYITDVI (102 aa)). 6 Kelch repeats span residues 282–329 (VLLV…SLHD), 331–379 (IYVI…TLGD), 380–426 (MIYV…VASG), 427–473 (IIYC…LLND), 475–520 (IYVV…VLRG), and 522–567 (LYAI…VLRE). The interaction with DVL3 stretch occupies residues 405-568 (QWSMLGDMQT…DAGVCVLREK (164 aa)).

Component of the BCR(KLHL12) E3 ubiquitin ligase complex, at least composed of CUL3 and KLHL12 and RBX1. This complex interacts with DVL3 upon activation of the Wnt signaling pathway by WNT3A. Interacts with DRD4, KLHL2 and SEC31A. Interacts with PEF1 and PDCD6/ALG-2; interaction takes place in response to cytosolic calcium increase and leads to bridge together the BCR(KLHL12) complex and SEC31 (SEC31A or SEC31B). In terms of processing, ubiquitinated by the SCF(FBXL17) complex, leading to its degradation by the proteasome: ubiquitination by the SCF(FBXL17) complex takes place when aberrant BTB domain dimers are formed.

It is found in the cytoplasmic vesicle. It localises to the COPII-coated vesicle. The protein operates within protein modification; protein ubiquitination. Functionally, substrate-specific adapter of a BCR (BTB-CUL3-RBX1) E3 ubiquitin ligase complex that acts as a negative regulator of Wnt signaling pathway and ER-Golgi transport. The BCR(KLHL12) complex is involved in ER-Golgi transport by regulating the size of COPII coats, thereby playing a key role in collagen export, which is required for embryonic stem (ES) cells division: BCR(KLHL12) acts by mediating monoubiquitination of SEC31 (SEC31A or SEC31B). The BCR(KLHL12) complex is also involved in neural crest specification: in response to cytosolic calcium increase, interacts with the heterodimer formed with PEF1 and PDCD6/ALG-2, leading to bridge together the BCR(KLHL12) complex and SEC31 (SEC31A or SEC31B), promoting monoubiquitination of SEC31 and subsequent collagen export. As part of the BCR(KLHL12) complex, also acts as a negative regulator of the Wnt signaling pathway by mediating ubiquitination and subsequent proteolysis of DVL3. The BCR(KLHL12) complex also mediates polyubiquitination of DRD4 and PEF1, without leading to degradation of these proteins. In Rattus norvegicus (Rat), this protein is Kelch-like protein 12 (Klhl12).